Consider the following 188-residue polypeptide: Adenine phosphoribosyltransferase (188 aa).

This sequence belongs to the purine/pyrimidine phosphoribosyltransferase family. As to quaternary structure, homodimer.

It is found in the cytoplasm. It carries out the reaction AMP + diphosphate = 5-phospho-alpha-D-ribose 1-diphosphate + adenine. It functions in the pathway purine metabolism; AMP biosynthesis via salvage pathway; AMP from adenine: step 1/1. Catalyzes a salvage reaction resulting in the formation of AMP, that is energically less costly than de novo synthesis. The sequence is that of Adenine phosphoribosyltransferase from Burkholderia lata (strain ATCC 17760 / DSM 23089 / LMG 22485 / NCIMB 9086 / R18194 / 383).